Here is a 112-residue protein sequence, read N- to C-terminus: Thioredoxin (112 aa).

One can recognise a Thioredoxin domain in the interval 2-112 (SEDSATVAVT…ALLRELSDAL (111 aa)). Cysteine 35 and cysteine 38 are oxidised to a cystine.

Belongs to the thioredoxin family.

Its function is as follows. Participates in various redox reactions through the reversible oxidation of its active center dithiol to a disulfide and catalyzes dithiol-disulfide exchange reactions. This chain is Thioredoxin (trxA), found in Mycolicibacterium smegmatis (Mycobacterium smegmatis).